We begin with the raw amino-acid sequence, 114 residues long: FK506-binding protein 1 (114 aa).

A PPIase FKBP-type domain is found at 26–114 (GDLVTIHYTG…IFDVELLKVN (89 aa)).

Belongs to the FKBP-type PPIase family. FKBP1 subfamily.

Its subcellular location is the cytoplasm. The catalysed reaction is [protein]-peptidylproline (omega=180) = [protein]-peptidylproline (omega=0). Inhibited by both FK506 and rapamycin. PPIases accelerate the folding of proteins. It catalyzes the cis-trans isomerization of proline imidic peptide bonds in oligopeptides. In Candida glabrata (strain ATCC 2001 / BCRC 20586 / JCM 3761 / NBRC 0622 / NRRL Y-65 / CBS 138) (Yeast), this protein is FK506-binding protein 1 (FPR1).